The sequence spans 966 residues: Catenin alpha-2 (966 aa).

Residues 924–940 (PEKKPLVKREKPEEYQT) are compositionally biased toward basic and acidic residues. Residues 924–952 (PEKKPLVKREKPEEYQTRVRRGSQKKHIS) are disordered. Residues 941 to 951 (RVRRGSQKKHI) are compositionally biased toward basic residues.

This sequence belongs to the vinculin/alpha-catenin family.

It localises to the cell membrane. The protein resides in the cytoplasm. Its subcellular location is the cytoskeleton. The protein localises to the cell junction. It is found in the adherens junction. It localises to the cell projection. The protein resides in the axon. Its subcellular location is the nucleus. May function as a linker between cadherin adhesion receptors and the cytoskeleton to regulate cell-cell adhesion and differentiation in the nervous system. The protein is Catenin alpha-2 (ctnna2) of Xenopus tropicalis (Western clawed frog).